Here is a 161-residue protein sequence, read N- to C-terminus: Globin CTT-VIIB-4 (161 aa).

The first 16 residues, 1 to 16 (MKFFAVLALCIVGAIA), serve as a signal peptide directing secretion. A Globin domain is found at 18–161 (PLTADEASLV…NTMAVAVAHL (144 aa)). Residues histidine 76 and histidine 111 each coordinate heme b.

It belongs to the globin family. In terms of assembly, homodimer.

This Chironomus thummi thummi (Midge) protein is Globin CTT-VIIB-4 (CTT-7B4).